A 258-amino-acid polypeptide reads, in one-letter code: Triosephosphate isomerase (258 aa).

11 to 13 (NWK) contributes to the substrate binding site. H101 acts as the Electrophile in catalysis. E173 serves as the catalytic Proton acceptor. Substrate-binding positions include G179, S219, and 240-241 (GG).

The protein belongs to the triosephosphate isomerase family. Homodimer.

Its subcellular location is the cytoplasm. The catalysed reaction is D-glyceraldehyde 3-phosphate = dihydroxyacetone phosphate. It functions in the pathway carbohydrate biosynthesis; gluconeogenesis. The protein operates within carbohydrate degradation; glycolysis; D-glyceraldehyde 3-phosphate from glycerone phosphate: step 1/1. Its function is as follows. Involved in the gluconeogenesis. Catalyzes stereospecifically the conversion of dihydroxyacetone phosphate (DHAP) to D-glyceraldehyde-3-phosphate (G3P). The protein is Triosephosphate isomerase of Streptomyces coelicolor (strain ATCC BAA-471 / A3(2) / M145).